The following is an 87-amino-acid chain: Large ribosomal subunit protein bL31B (87 aa).

The protein belongs to the bacterial ribosomal protein bL31 family. Type B subfamily. Part of the 50S ribosomal subunit.

The sequence is that of Large ribosomal subunit protein bL31B from Burkholderia vietnamiensis (strain G4 / LMG 22486) (Burkholderia cepacia (strain R1808)).